Here is a 294-residue protein sequence, read N- to C-terminus: 4-hydroxy-tetrahydrodipicolinate synthase (294 aa).

Threonine 45 contacts pyruvate. Tyrosine 133 acts as the Proton donor/acceptor in catalysis. Lysine 161 functions as the Schiff-base intermediate with substrate in the catalytic mechanism. Isoleucine 203 lines the pyruvate pocket.

Belongs to the DapA family. As to quaternary structure, homotetramer; dimer of dimers.

It is found in the cytoplasm. It catalyses the reaction L-aspartate 4-semialdehyde + pyruvate = (2S,4S)-4-hydroxy-2,3,4,5-tetrahydrodipicolinate + H2O + H(+). It participates in amino-acid biosynthesis; L-lysine biosynthesis via DAP pathway; (S)-tetrahydrodipicolinate from L-aspartate: step 3/4. Catalyzes the condensation of (S)-aspartate-beta-semialdehyde [(S)-ASA] and pyruvate to 4-hydroxy-tetrahydrodipicolinate (HTPA). The sequence is that of 4-hydroxy-tetrahydrodipicolinate synthase from Shewanella sp. (strain MR-4).